Reading from the N-terminus, the 379-residue chain is Cysteine-rich receptor-like protein kinase 44 (379 aa).

The region spanning 56-336 is the Protein kinase domain; sequence FSPYNHLGEG…VRMLNANSFT (281 aa). ATP-binding positions include 62-70 and lysine 84; that span reads LGEGGFGAV. Tyrosine 129 bears the Phosphotyrosine mark. Aspartate 181 functions as the Proton acceptor in the catalytic mechanism. Serine 185 carries the post-translational modification Phosphoserine. The residue at position 223 (threonine 223) is a Phosphothreonine. The residue at position 231 (tyrosine 231) is a Phosphotyrosine.

Belongs to the protein kinase superfamily. Ser/Thr protein kinase family. CRK subfamily.

It carries out the reaction L-seryl-[protein] + ATP = O-phospho-L-seryl-[protein] + ADP + H(+). The enzyme catalyses L-threonyl-[protein] + ATP = O-phospho-L-threonyl-[protein] + ADP + H(+). The protein is Cysteine-rich receptor-like protein kinase 44 of Arabidopsis thaliana (Mouse-ear cress).